The sequence spans 144 residues: Large ribosomal subunit protein uL15 (144 aa).

Residues 1-52 form a disordered region; it reads MRLNTLSPAEGAKHSAKRLGRGIGSGLGKTGGRGHKGQKSRTGSGVRRGFEG. Gly residues predominate over residues 21–31; the sequence is RGIGSGLGKTG.

It belongs to the universal ribosomal protein uL15 family. As to quaternary structure, part of the 50S ribosomal subunit.

In terms of biological role, binds to the 23S rRNA. In Haemophilus influenzae (strain 86-028NP), this protein is Large ribosomal subunit protein uL15.